A 568-amino-acid chain; its full sequence is Delta 8-(E)-sphingolipid desaturase (568 aa).

Residues 2 to 77 (DNIISRGEIE…FRKWRIGRID (76 aa)) form the Cytochrome b5 heme-binding domain. Heme is bound by residues His37 and His60. The next 2 helical transmembrane spans lie at 241–261 (FWSA…AHDA) and 272–292 (LDNI…LGWW). A Histidine box-1 motif is present at residues 259 to 263 (HDAGH). Residues 296-300 (HNVHH) carry the Histidine box-2 motif. 3 helical membrane passes run 352-377 (YLYY…LLGL), 389-409 (YFEL…LVGC), and 421-441 (IMVS…SHFA). A Histidine box-3 motif is present at residues 480–484 (QVVHH). Basic and acidic residues predominate over residues 549-560 (ATGEREADEKTY). The tract at residues 549 to 568 (ATGEREADEKTYRTKSIKNA) is disordered.

It belongs to the fatty acid desaturase type 1 family.

Its subcellular location is the membrane. It carries out the reaction an N-acylsphing-4-enine + 2 Fe(II)-[cytochrome b5] + O2 + 2 H(+) = a (4E,8E)-4-sphinga-4,8-dienine ceramide + 2 Fe(III)-[cytochrome b5] + 2 H2O. It participates in lipid metabolism; sphingolipid metabolism. Delta(8)-fatty-acid desaturase which introduces a double bond at the 8-position in the long-chain base (LCB) of ceramides. Required for the formation of the di-unsaturated sphingoid base (E,E)-sphinga-4,8-dienine during glucosylceramide (GluCer) biosynthesis. The sequence is that of Delta 8-(E)-sphingolipid desaturase from Lachancea kluyveri (strain ATCC 58438 / CBS 3082 / BCRC 21498 / NBRC 1685 / JCM 7257 / NCYC 543 / NRRL Y-12651) (Yeast).